Here is a 1234-residue protein sequence, read N- to C-terminus: ATP-dependent helicase/nuclease subunit A (1234 aa).

A UvrD-like helicase ATP-binding domain is found at 2–475 (TQFTTSQQAA…IILAENFRST (474 aa)). 23 to 30 (ASAGSGKT) is a binding site for ATP. The UvrD-like helicase C-terminal domain maps to 507–806 (YGALDYGDAH…KLMTIHKSKG (300 aa)).

Belongs to the helicase family. AddA subfamily. In terms of assembly, heterodimer of AddA and AddB/RexB. The cofactor is Mg(2+).

The enzyme catalyses Couples ATP hydrolysis with the unwinding of duplex DNA by translocating in the 3'-5' direction.. The catalysed reaction is ATP + H2O = ADP + phosphate + H(+). Its function is as follows. The heterodimer acts as both an ATP-dependent DNA helicase and an ATP-dependent, dual-direction single-stranded exonuclease. Recognizes the chi site generating a DNA molecule suitable for the initiation of homologous recombination. The AddA nuclease domain is required for chi fragment generation; this subunit has the helicase and 3' -&gt; 5' nuclease activities. This Lacticaseibacillus casei (strain BL23) (Lactobacillus casei) protein is ATP-dependent helicase/nuclease subunit A.